A 473-amino-acid chain; its full sequence is Serine palmitoyltransferase 1 (473 aa).

Residues 1–66 (MATATEQWVL…KEELIEEWQP (66 aa)) are interaction with SPTLC2. A helical membrane pass occupies residues 16-36 (ALYEAPAYHLILEGILILWII). Residue Tyr-164 is modified to Phosphotyrosine; by ABL.

It belongs to the class-II pyridoxal-phosphate-dependent aminotransferase family. Component of the serine palmitoyltransferase (SPT) complex, which is also composed of SPTLC2 or SPTLC3 and SPTSSA or SPTSSB. The heterodimer with SPTLC2 or SPTLC3 forms the catalytic core of the enzyme, while SPTSSA or SPTSSB subunits determine substrate specificity. SPT also interacts with ORMDL proteins, especially ORMDL3, which negatively regulate SPT activity in the presence of ceramides. Forms dimers of heterodimers with SPTLC2. Interacts with RTN4. Pyridoxal 5'-phosphate serves as cofactor. Phosphorylation at Tyr-164 inhibits activity and promotes cell survival.

It localises to the endoplasmic reticulum membrane. It catalyses the reaction L-serine + hexadecanoyl-CoA + H(+) = 3-oxosphinganine + CO2 + CoA. It carries out the reaction octadecanoyl-CoA + L-serine + H(+) = 3-oxoeicosasphinganine + CO2 + CoA. The enzyme catalyses tetradecanoyl-CoA + L-serine + H(+) = 3-oxohexadecasphinganine + CO2 + CoA. The catalysed reaction is dodecanoyl-CoA + L-serine + H(+) = 3-oxotetradecasphinganine + CO2 + CoA. It functions in the pathway lipid metabolism; sphingolipid metabolism. SPT complex catalytic activity is negatively regulated by ORMDL proteins, including ORMDL3, in the presence of ceramides. This mechanism allows to maintain ceramide levels at sufficient concentrations for the production of complex sphingolipids, but which prevents the accumulation of ceramides to levels that trigger apoptosis. Component of the serine palmitoyltransferase multisubunit enzyme (SPT) that catalyzes the initial and rate-limiting step in sphingolipid biosynthesis by condensing L-serine and activated acyl-CoA (most commonly palmitoyl-CoA) to form long-chain bases. The SPT complex is also composed of SPTLC2 or SPTLC3 and SPTSSA or SPTSSB. Within this complex, the heterodimer with SPTLC2 or SPTLC3 forms the catalytic core. The composition of the serine palmitoyltransferase (SPT) complex determines the substrate preference. The SPTLC1-SPTLC2-SPTSSA complex shows a strong preference for C16-CoA substrate, while the SPTLC1-SPTLC3-SPTSSA isozyme uses both C14-CoA and C16-CoA as substrates, with a slight preference for C14-CoA. The SPTLC1-SPTLC2-SPTSSB complex shows a strong preference for C18-CoA substrate, while the SPTLC1-SPTLC3-SPTSSB isozyme displays an ability to use a broader range of acyl-CoAs, without apparent preference. Required for adipocyte cell viability and metabolic homeostasis. The polypeptide is Serine palmitoyltransferase 1 (SPTLC1) (Pongo abelii (Sumatran orangutan)).